We begin with the raw amino-acid sequence, 356 residues long: S-adenosylmethionine:tRNA ribosyltransferase-isomerase (356 aa).

Belongs to the QueA family. In terms of assembly, monomer.

The protein resides in the cytoplasm. It carries out the reaction 7-aminomethyl-7-carbaguanosine(34) in tRNA + S-adenosyl-L-methionine = epoxyqueuosine(34) in tRNA + adenine + L-methionine + 2 H(+). It functions in the pathway tRNA modification; tRNA-queuosine biosynthesis. Its function is as follows. Transfers and isomerizes the ribose moiety from AdoMet to the 7-aminomethyl group of 7-deazaguanine (preQ1-tRNA) to give epoxyqueuosine (oQ-tRNA). In Yersinia pseudotuberculosis serotype O:3 (strain YPIII), this protein is S-adenosylmethionine:tRNA ribosyltransferase-isomerase.